Reading from the N-terminus, the 184-residue chain is Peptide deformylase (184 aa).

Fe cation contacts are provided by Cys-111 and His-154. Glu-155 is an active-site residue. His-158 serves as a coordination point for Fe cation.

It belongs to the polypeptide deformylase family. Fe(2+) serves as cofactor.

It carries out the reaction N-terminal N-formyl-L-methionyl-[peptide] + H2O = N-terminal L-methionyl-[peptide] + formate. In terms of biological role, removes the formyl group from the N-terminal Met of newly synthesized proteins. Requires at least a dipeptide for an efficient rate of reaction. N-terminal L-methionine is a prerequisite for activity but the enzyme has broad specificity at other positions. This is Peptide deformylase from Lactobacillus helveticus (strain DPC 4571).